Reading from the N-terminus, the 461-residue chain is Steroidogenic factor 1 (461 aa).

The segment at residues 10–85 (DELCPVCGDK…VGMRLEAVRA (76 aa)) is a DNA-binding region (nuclear receptor). The NR C4-type zinc-finger motif lies at 13-33 (CPVCGDKVSGYHYGLLTCESC). An N6-acetyllysine mark is found at Lys34, Lys38, and Lys72. The segment at 49–73 (CTESQSCKIDKTQRKRCPFCRFQKC) adopts an NR C4-type zinc-finger fold. Lys119 participates in a covalent cross-link: Glycyl lysine isopeptide (Lys-Gly) (interchain with G-Cter in SUMO). The segment at 119–157 (KLETGPPMGVPPPPPPAPDYVLPPSLHGPEPKGLAAGPP) is disordered. The segment covering 126–136 (MGVPPPPPPAP) has biased composition (pro residues). Residue Lys194 forms a Glycyl lysine isopeptide (Lys-Gly) (interchain with G-Cter in SUMO) linkage. Ser203 carries the phosphoserine; by CDK7 modification. Positions 222–459 (NVPELILQLL…NLLIEMLQAK (238 aa)) constitute an NR LBD domain. The tract at residues 230–461 (LLQLEPDEDQ…LIEMLQAKQT (232 aa)) is important for dimerization. A 1,2-diacyl-sn-glycero-3-phosphocholine contacts are provided by Gly341, Tyr436, and Lys440. A 1,2-diacylglycero-3-phosphoethanolamine is bound by residues Gly341, Tyr436, and Lys440.

It belongs to the nuclear hormone receptor family. NR5 subfamily. As to quaternary structure, binds DNA as a monomer. Interacts with NR0B2 and PPARGC1A. Part of a complex consisting of SFPQ, NONO and NR5A1. Interacts with NCOA2. Interacts with DGKQ and CDK7. Binds to and activated by HIPK3. Acetylation stimulates the transcriptional activity. Post-translationally, sumoylation reduces CDK7-mediated phosphorylation on Ser-203. In terms of processing, phosphorylated on Ser-203 by CDK7. This phosphorylation promotes transcriptional activity. As to expression, high expressed in the adrenal cortex, the ovary, the testis, and the spleen.

Its subcellular location is the nucleus. In terms of biological role, transcriptional activator. Essential for sexual differentiation and formation of the primary steroidogenic tissues. Binds to the Ad4 site found in the promoter region of steroidogenic P450 genes such as CYP11A, CYP11B and CYP21B. Also regulates the AMH/Muellerian inhibiting substance gene as well as the AHCH and STAR genes. 5'-YCAAGGYC-3' and 5'-RRAGGTCA-3' are the consensus sequences for the recognition by NR5A1. The SFPQ-NONO-NR5A1 complex binds to the CYP17 promoter and regulates basal and cAMP-dependent transcriptional activity. Binds phosphatidylcholine. Binds phospholipids with a phosphatidylinositol (PI) headgroup, in particular PI(3,4)P2 and PI(3,4,5)P3. Activated by the phosphorylation of NR5A1 by HIPK3 leading to increased steroidogenic gene expression upon cAMP signaling pathway stimulation. The protein is Steroidogenic factor 1 (NR5A1) of Homo sapiens (Human).